The primary structure comprises 1342 residues: Restriction of telomere capping protein 1 (1342 aa).

The disordered stretch occupies residues 1–39 (MSLSPHVENASIPKGSTPIPKNRNVSSIGKGEFLGSSSS). WD repeat units lie at residues 207–248 (NKFS…SIDN), 256–296 (EHTR…SKSS), 305–342 (TASD…YKFA), 367–406 (AHTG…NAAE), 439–486 (NTGY…IPKH), and 489–527 (LSET…TVLE). Disordered regions lie at residues 559–593 (PELQ…IGGI), 600–619 (TGLT…GPTF), 630–651 (ASSF…ENRE), 736–766 (KNAT…DDDD), and 788–831 (LMNE…DRSR). Residues 630–644 (ASSFNSSSASLTSLT) are compositionally biased toward low complexity. The segment covering 753–766 (DDGDDDDDDDDDDD) has biased composition (acidic residues). A compositionally biased stretch (low complexity) spans 815–824 (SSISSISASR). One copy of the WD 7 repeat lies at 844–884 (KIQTLVDLISIATHNASVYLSIDDLTNFKIWILIRDSLLWD). Disordered stretches follow at residues 942–963 (AFRA…KLKE) and 1014–1047 (DEHE…PILQ). 2 stretches are compositionally biased toward basic and acidic residues: residues 952–963 (DAEKKPVSKLKE) and 1016–1028 (HEHQ…HDSP). Residues serine 1037, serine 1081, serine 1088, serine 1090, serine 1124, and serine 1134 each carry the phosphoserine modification. 2 WD repeats span residues 1130–1170 (SRPD…KQLY) and 1217–1256 (LFGI…LITN). The RING-type; degenerate zinc finger occupies 1294–1336 (CVLCERPLKKLTMVILPCGHEGHFQCIQEWFLDENEQECPGGC).

Belongs to the WD repeat RTC1 family.

The protein resides in the vacuole. Functionally, may be involved in a process influencing telomere capping. This is Restriction of telomere capping protein 1 (RTC1) from Saccharomyces cerevisiae (strain JAY291) (Baker's yeast).